A 34-amino-acid polypeptide reads, in one-letter code: Photosystem II reaction center protein M (34 aa).

The chain crosses the membrane as a helical span at residues 5–25 (ILGLIATTLFILIPTSFLLIL).

This sequence belongs to the PsbM family. In terms of assembly, PSII is composed of 1 copy each of membrane proteins PsbA, PsbB, PsbC, PsbD, PsbE, PsbF, PsbH, PsbI, PsbJ, PsbK, PsbL, PsbM, PsbT, PsbX, PsbY, PsbZ, Psb30/Ycf12, at least 3 peripheral proteins of the oxygen-evolving complex and a large number of cofactors. It forms dimeric complexes.

The protein localises to the plastid. The protein resides in the chloroplast thylakoid membrane. Its function is as follows. One of the components of the core complex of photosystem II (PSII). PSII is a light-driven water:plastoquinone oxidoreductase that uses light energy to abstract electrons from H(2)O, generating O(2) and a proton gradient subsequently used for ATP formation. It consists of a core antenna complex that captures photons, and an electron transfer chain that converts photonic excitation into a charge separation. This subunit is found at the monomer-monomer interface. This chain is Photosystem II reaction center protein M, found in Pleurastrum terricola (Filamentous green alga).